The sequence spans 461 residues: Ornithine decarboxylase (461 aa).

K69 bears the N6-(pyridoxal phosphate)lysine mark. Pyridoxal 5'-phosphate contacts are provided by residues S200, G237, and 274–277 (EPGR). Phosphoserine; by CK2 is present on S303. 331–332 (YD) is a binding site for substrate. Catalysis depends on C360, which acts as the Proton donor; shared with dimeric partner. The residue at position 360 (C360) is an S-nitrosocysteine. D361 lines the substrate pocket. Y389 is a pyridoxal 5'-phosphate binding site.

Belongs to the Orn/Lys/Arg decarboxylase class-II family. As to quaternary structure, homodimer. Only the dimer is catalytically active, as the active sites are constructed of residues from both monomers. Pyridoxal 5'-phosphate is required as a cofactor.

It carries out the reaction L-ornithine + H(+) = putrescine + CO2. It functions in the pathway amine and polyamine biosynthesis; putrescine biosynthesis via L-ornithine pathway; putrescine from L-ornithine: step 1/1. Its activity is regulated as follows. Inhibited by antizymes (AZs) OAZ1, OAZ2 and OAZ3 in response to polyamine levels. AZs inhibit the assembly of the functional homodimer by binding to ODC monomers. Additionally, OAZ1 targets ODC monomers for ubiquitin-independent proteolytic destruction by the 26S proteasome. Functionally, catalyzes the first and rate-limiting step of polyamine biosynthesis that converts ornithine into putrescine, which is the precursor for the polyamines, spermidine and spermine. Polyamines are essential for cell proliferation and are implicated in cellular processes, ranging from DNA replication to apoptosis. This chain is Ornithine decarboxylase (Odc1), found in Mus pahari (Gairdner's shrew-mouse).